Reading from the N-terminus, the 276-residue chain is Large ribosomal subunit protein uL2 (276 aa).

2 disordered regions span residues P36–G55 and T219–K276. Positions L255–K276 are enriched in basic residues.

This sequence belongs to the universal ribosomal protein uL2 family. As to quaternary structure, part of the 50S ribosomal subunit. Forms a bridge to the 30S subunit in the 70S ribosome.

Functionally, one of the primary rRNA binding proteins. Required for association of the 30S and 50S subunits to form the 70S ribosome, for tRNA binding and peptide bond formation. It has been suggested to have peptidyltransferase activity; this is somewhat controversial. Makes several contacts with the 16S rRNA in the 70S ribosome. This is Large ribosomal subunit protein uL2 from Macrococcus caseolyticus (strain JCSC5402) (Macrococcoides caseolyticum).